We begin with the raw amino-acid sequence, 147 residues long: Hemoglobin subunit delta (147 aa).

Residues 3 to 147 enclose the Globin domain; that stretch reads HLTADEKAAV…VAAALAHKYH (145 aa). 2 residues coordinate heme b: H64 and H93.

The protein belongs to the globin family. Heterotetramer of two delta chains and two alpha chains. In terms of tissue distribution, red blood cells.

The sequence is that of Hemoglobin subunit delta (HBD) from Carlito syrichta (Philippine tarsier).